The following is a 96-amino-acid chain: SAGA-associated factor 11 (96 aa).

An SGF11-type zinc finger spans residues 68–89 (FHCKNCGRDVSANRFAAHLQRC).

It belongs to the SGF11 family. Component of the 1.8 MDa SAGA transcription coactivator-HAT complex. SAGA is built of 5 distinct domains with specialized functions. Within the SAGA complex, SUS1, SGF11, SGF73 and UBP8 form an additional subcomplex of SAGA called the DUB module (deubiquitination module). Interacts directly with SGF73, SUS1 and UBP8.

Its subcellular location is the nucleus. Functionally, functions as a component of the transcription regulatory histone acetylation (HAT) complex SAGA. At the promoters, SAGA is required for recruitment of the basal transcription machinery. It influences RNA polymerase II transcriptional activity through different activities such as TBP interaction and promoter selectivity, interaction with transcription activators, and chromatin modification through histone acetylation and deubiquitination. SAGA acetylates nucleosomal histone H3 to some extent (to form H3K9ac, H3K14ac, H3K18ac and H3K23ac). SAGA interacts with DNA via upstream activating sequences (UASs). Involved in transcriptional regulation of a subset of SAGA-regulated genes. Within the SAGA complex, participates in a subcomplex, that specifically deubiquitinates histones H2B. The protein is SAGA-associated factor 11 of Vanderwaltozyma polyspora (strain ATCC 22028 / DSM 70294 / BCRC 21397 / CBS 2163 / NBRC 10782 / NRRL Y-8283 / UCD 57-17) (Kluyveromyces polysporus).